Consider the following 689-residue polypeptide: Centrosomal protein of 78 kDa (689 aa).

Ser-325 and Ser-327 each carry phosphoserine. 3 disordered regions span residues 432–451, 563–589, and 614–689; these read SSEVEEVDDSSESVHEVPEK, PQMTSTVSNPPKEEKKALEDEKPEPKQ, and DSFP…TESH. A coiled-coil region spans residues 450–505; the sequence is EKTSIEQEALQEKLEECLKQLKEERVIRLKVDKRVSELEHENAQLRNINFSLSEAL. 2 stretches are compositionally biased toward basic and acidic residues: residues 573–587 and 666–689; these read PKEEKKALEDEKPEP and QRKEEELSRNSRSSSEKKTKTESH.

The protein belongs to the CEP78 family. As to quaternary structure, interacts with PLK4. Interacts with FAM161A. Interacts with IFT20; regulating IFT20 stability and localization. Interacts with TTC21A; regulating TTC21A stability and localization. Interacts with USP16; promoting USP16-dependent deubiquitination of tektins. Interacts with DCAF1/VPRBP; promoting localization of the EDVP complex to centrosomes. Interacts with CEP350; promoting CEP78 localization to centrosome and centriole. In terms of tissue distribution, widely expressed. Expressed in different retinal cell types with higher expression in cone compared to rod cells (at protein level).

The protein localises to the cytoplasm. The protein resides in the cytoskeleton. It localises to the microtubule organizing center. Its subcellular location is the centrosome. It is found in the centriole. The protein localises to the cilium basal body. Its function is as follows. Centriole wall protein that localizes to mature centrioles and regulates centriole and cilia biogenesis. Involved in centrosome duplication: required for efficient PLK4 centrosomal localization and PLK4-induced overduplication of centrioles. Involved in cilium biogenesis and controls cilium length. Acts as a regulator of protein stability by preventing ubiquitination of centrosomal proteins, such as CCP110 and tektins. Associates with the EDVP complex, preventing ubiquitination and degradation of CCP110. Promotes deubiquitination of tektin proteins (TEKT1, TEKT2, TEK3, TEKT4 and TEKT5) via its interaction with USP16. This Homo sapiens (Human) protein is Centrosomal protein of 78 kDa.